A 137-amino-acid polypeptide reads, in one-letter code: MLQPKRTKFRKVHTGRNRGLAQSGNKVSFGTFGLKATDRGRMTARQIEAGRRAMTRHVKRQGKIWIRVFPDKPITKKPLEVRMGKGKGNVEYWVAQIQPGRVLYEMDGVPEELAREAFRLAARKLPFKTTFVTRTVM.

Positions 1 to 16 are enriched in basic residues; the sequence is MLQPKRTKFRKVHTGR. The disordered stretch occupies residues 1–22; sequence MLQPKRTKFRKVHTGRNRGLAQ.

This sequence belongs to the universal ribosomal protein uL16 family. As to quaternary structure, part of the 50S ribosomal subunit.

In terms of biological role, binds 23S rRNA and is also seen to make contacts with the A and possibly P site tRNAs. The polypeptide is Large ribosomal subunit protein uL16 (Idiomarina loihiensis (strain ATCC BAA-735 / DSM 15497 / L2-TR)).